A 138-amino-acid chain; its full sequence is Large ribosomal subunit protein uL16 (138 aa).

The span at 1–13 shows a compositional bias: basic residues; sequence MLQPKRRKYRKEQ. Residues 1–24 form a disordered region; the sequence is MLQPKRRKYRKEQKGRNTGKATRG.

It belongs to the universal ribosomal protein uL16 family. Part of the 50S ribosomal subunit.

In terms of biological role, binds 23S rRNA and is also seen to make contacts with the A and possibly P site tRNAs. This is Large ribosomal subunit protein uL16 from Burkholderia lata (strain ATCC 17760 / DSM 23089 / LMG 22485 / NCIMB 9086 / R18194 / 383).